The following is a 639-amino-acid chain: Protein sly1 homolog (639 aa).

Tandem repeats lie at residues 85–121, 203–245, 423–460, and 464–500. A 4 X approximate repeats region spans residues 85–500; sequence DENLDRIQQD…QATQYEGGGT (416 aa).

Belongs to the STXBP/unc-18/SEC1 family. In embryos, from stage 14, expression is seen in posterior midgut, esophagus and salivary glands. No expression is seen in larval imaginal disks.

It localises to the cytoplasm. The protein localises to the membrane. Functionally, non-vital for development. This chain is Protein sly1 homolog (Slh), found in Drosophila melanogaster (Fruit fly).